The following is a 476-amino-acid chain: Monodehydroascorbate reductase 2, peroxisomal (476 aa).

Topologically, residues 1 to 3 (MGR) are cytoplasmic. Residues 4–24 (AFVHVILGGGVAAGYAALEFA) traverse the membrane as a helical segment. FAD is bound by residues 12 to 15 (GGVA), glutamate 40, arginine 47, lysine 52, and 146 to 147 (RN). Over 25–447 (RRGGYSRGEL…GGLALGEKPT (423 aa)) the chain is Peroxisomal. NAD(+) is bound by residues 171-177 (GGYIGME), glutamate 195, arginine 201, and glycine 260. 173–177 (YIGME) contributes to the NADP(+) binding site. The NADP(+) site is built by arginine 201 and glycine 260. Aspartate 297 contacts FAD. Position 314–315 (314–315 (EH)) interacts with NAD(+). 314 to 315 (EH) is a binding site for NADP(+). Valine 316 serves as a coordination point for FAD. Arginine 320 is an L-ascorbate binding site. Tyrosine 346 is an FAD binding site. Tyrosine 346 is a binding site for NAD(+). NADP(+) is bound at residue tyrosine 346. Arginine 348 is an L-ascorbate binding site. A helical transmembrane segment spans residues 448–468 (YVWHATAGVIAAASIAAFGYW). The Cytoplasmic segment spans residues 469–476 (YGRKRRRW).

The protein belongs to the FAD-dependent oxidoreductase family. FAD is required as a cofactor.

It localises to the peroxisome membrane. It carries out the reaction 2 monodehydro-L-ascorbate radical + NADH + H(+) = 2 L-ascorbate + NAD(+). In terms of biological role, catalyzes the conversion of monodehydroascorbate to ascorbate, oxidizing NADH in the process. Ascorbate is a major antioxidant against reactive oxygen species (ROS) and nitric oxide (NO). In Oryza sativa subsp. japonica (Rice), this protein is Monodehydroascorbate reductase 2, peroxisomal.